A 341-amino-acid chain; its full sequence is Dihydroorotate dehydrogenase (quinone) (341 aa).

Residues 62–66 (AGMDK) and Thr86 each bind FMN. Lys66 contacts substrate. A substrate-binding site is contributed by 111–115 (NRMGF). The FMN site is built by Asn139 and Asn172. Asn172 is a binding site for substrate. Residue Ser175 is the Nucleophile of the active site. Asn177 provides a ligand contact to substrate. Residues Lys217 and Thr245 each contribute to the FMN site. Residue 246–247 (NT) coordinates substrate. FMN contacts are provided by residues Gly268, Gly297, and 318–319 (YS).

The protein belongs to the dihydroorotate dehydrogenase family. Type 2 subfamily. As to quaternary structure, monomer. It depends on FMN as a cofactor.

It is found in the cell membrane. The catalysed reaction is (S)-dihydroorotate + a quinone = orotate + a quinol. It functions in the pathway pyrimidine metabolism; UMP biosynthesis via de novo pathway; orotate from (S)-dihydroorotate (quinone route): step 1/1. Catalyzes the conversion of dihydroorotate to orotate with quinone as electron acceptor. This is Dihydroorotate dehydrogenase (quinone) from Shewanella loihica (strain ATCC BAA-1088 / PV-4).